Reading from the N-terminus, the 192-residue chain is A-type ATP synthase subunit E (192 aa).

Belongs to the V-ATPase E subunit family. In terms of assembly, has multiple subunits with at least A(3), B(3), C, D, E, F, H, I and proteolipid K(x).

It is found in the cell membrane. Its function is as follows. Component of the A-type ATP synthase that produces ATP from ADP in the presence of a proton gradient across the membrane. This is A-type ATP synthase subunit E from Metallosphaera sedula (strain ATCC 51363 / DSM 5348 / JCM 9185 / NBRC 15509 / TH2).